Reading from the N-terminus, the 190-residue chain is Potassium-transporting ATPase KdpC subunit (190 aa).

Residues Leu11 to Ala31 form a helical membrane-spanning segment.

It belongs to the KdpC family. As to quaternary structure, the system is composed of three essential subunits: KdpA, KdpB and KdpC.

It is found in the cell inner membrane. Its function is as follows. Part of the high-affinity ATP-driven potassium transport (or Kdp) system, which catalyzes the hydrolysis of ATP coupled with the electrogenic transport of potassium into the cytoplasm. This subunit acts as a catalytic chaperone that increases the ATP-binding affinity of the ATP-hydrolyzing subunit KdpB by the formation of a transient KdpB/KdpC/ATP ternary complex. This chain is Potassium-transporting ATPase KdpC subunit, found in Pseudomonas syringae pv. tomato (strain ATCC BAA-871 / DC3000).